A 288-amino-acid polypeptide reads, in one-letter code: Energy-coupling factor transporter ATP-binding protein EcfA2 (288 aa).

The ABC transporter domain occupies 3–246; that stretch reads IKLEQLGYCY…PDELVDLGLS (244 aa). 40-47 lines the ATP pocket; sequence GHTGSGKS.

This sequence belongs to the ABC transporter superfamily. Energy-coupling factor EcfA family. In terms of assembly, forms a stable energy-coupling factor (ECF) transporter complex composed of 2 membrane-embedded substrate-binding proteins (S component), 2 ATP-binding proteins (A component) and 2 transmembrane proteins (T component).

It localises to the cell membrane. ATP-binding (A) component of a common energy-coupling factor (ECF) ABC-transporter complex. Unlike classic ABC transporters this ECF transporter provides the energy necessary to transport a number of different substrates. The polypeptide is Energy-coupling factor transporter ATP-binding protein EcfA2 (Listeria innocua serovar 6a (strain ATCC BAA-680 / CLIP 11262)).